Here is a 544-residue protein sequence, read N- to C-terminus: Chaperonin GroEL (544 aa).

Residues 29 to 32 (TLGP), 86 to 90 (DGTTT), Gly413, 476 to 478 (NAA), and Asp492 each bind ATP. The interval 522 to 544 (PDPNANNNAAAGANPAAGMGGMM) is disordered. The span at 524 to 538 (PNANNNAAAGANPAA) shows a compositional bias: low complexity.

The protein belongs to the chaperonin (HSP60) family. Forms a cylinder of 14 subunits composed of two heptameric rings stacked back-to-back. Interacts with the co-chaperonin GroES.

The protein localises to the cytoplasm. The catalysed reaction is ATP + H2O + a folded polypeptide = ADP + phosphate + an unfolded polypeptide.. Functionally, together with its co-chaperonin GroES, plays an essential role in assisting protein folding. The GroEL-GroES system forms a nano-cage that allows encapsulation of the non-native substrate proteins and provides a physical environment optimized to promote and accelerate protein folding. In Lacticaseibacillus casei (strain BL23) (Lactobacillus casei), this protein is Chaperonin GroEL.